Reading from the N-terminus, the 171-residue chain is O-acetyl-ADP-ribose deacetylase 2 (171 aa).

Positions 1-171 (MNKITVIQGD…NYDLYLKLLN (171 aa)) constitute a Macro domain. Substrate is bound by residues 10–11 (DI), asparagine 24, 32–34 (GVD), and 121–125 (STGIY). Aspartate 34 functions as the Proton acceptor in the catalytic mechanism.

Belongs to the MacroD-type family. YmdB subfamily. In terms of assembly, homodimer. Interacts with RNase III.

It carries out the reaction 3''-O-acetyl-ADP-D-ribose + H2O = ADP-D-ribose + acetate + H(+). It catalyses the reaction 2''-O-acetyl-ADP-D-ribose + H2O = ADP-D-ribose + acetate + H(+). Deacetylates O-acetyl-ADP ribose to yield ADP-ribose and free acetate. Down-regulates ribonuclease 3 (RNase III) activity. Acts by interacting directly with the region of the ribonuclease that is required for dimerization/activation. This chain is O-acetyl-ADP-ribose deacetylase 2, found in Pantoea vagans (strain C9-1) (Pantoea agglomerans (strain C9-1)).